A 347-amino-acid chain; its full sequence is Very-long-chain 3-oxoacyl-CoA reductase (347 aa).

Residues 22–42 form a helical membrane-spanning segment; the sequence is LLWSIFGFGVLKATTLILRIM. Residues V68, D122, N149, Y223, K227, V256, and S258 each coordinate NADP(+). Y223 (proton donor) is an active-site residue. Residue K227 is the Lowers pKa of active site Tyr of the active site.

It belongs to the short-chain dehydrogenases/reductases (SDR) family.

The protein localises to the endoplasmic reticulum membrane. It catalyses the reaction a very-long-chain (3R)-3-hydroxyacyl-CoA + NADP(+) = a very-long-chain 3-oxoacyl-CoA + NADPH + H(+). Its pathway is lipid metabolism; fatty acid biosynthesis. Its function is as follows. Component of the microsomal membrane bound fatty acid elongation system, which produces the 26-carbon very long-chain fatty acids (VLCFA) from palmitate. Catalyzes the reduction of the 3-ketoacyl-CoA intermediate that is formed in each cycle of fatty acid elongation. VLCFAs serve as precursors for ceramide and sphingolipids. This chain is Very-long-chain 3-oxoacyl-CoA reductase, found in Vanderwaltozyma polyspora (strain ATCC 22028 / DSM 70294 / BCRC 21397 / CBS 2163 / NBRC 10782 / NRRL Y-8283 / UCD 57-17) (Kluyveromyces polysporus).